The primary structure comprises 537 residues: Periplasmic murein peptide-binding protein MppA (537 aa).

Positions 1–22 (MKHSVSVTCCALLVSSISLSYA) are cleaved as a signal peptide. The L-alanyl-gamma-D-glutamyl-meso-2,6-diaminopimelate site is built by lysine 42, valine 54, leucine 56, glutamine 289, arginine 424, serine 435, valine 437, aspartate 439, and threonine 506.

Belongs to the bacterial solute-binding protein 5 family. In terms of assembly, the complex is composed of two ATP-binding proteins (OppD and OppF), two transmembrane proteins (OppB and OppC) and a solute-binding protein (MppA).

It localises to the periplasm. Part of the ABC transporter complex MppA-OppBCDF involved in the uptake of the cell wall murein tripeptide L-alanyl-gamma-D-glutamyl-meso-diaminopimelate. Is involved in the recycling of cell wall peptides. Binds the cell wall peptide L-Ala-D-Gly-gamma-meso-diaminopimelic acid. Can also transport ordinary alpha-linked tripeptides such as Pro-Phe-Lys, but with much lower efficiency than OppA. Cannot bind typical tripeptides such as Lys-Glu-Lys, Lys-Lys-Lys or Ala-Ala-Ala. This is Periplasmic murein peptide-binding protein MppA from Escherichia coli (strain K12).